Reading from the N-terminus, the 1057-residue chain is Adenylate-forming reductase stbB (1057 aa).

Positions 21–378 are adenylation (A) domain; sequence STKRQPGAVC…FRLRTDMNFE (358 aa). AMP contacts are provided by residues H251, 344–345, T349, and 423–426; these read NF and AVGR. Residues 564–651 enclose the Carrier domain; sequence ETLEEDIKAL…QMAAAIKNPS (88 aa). S600 is modified (O-(pantetheine 4'-phosphoryl)serine). The reductase (R) domain stretch occupies residues 693 to 1025; it reads IVVVTGSSGS…SGAVILGTDV (333 aa). Residues 700–703, 783–785, Y858, and K862 each bind NADP(+); these read SGSL and AAW.

The protein belongs to the adenylate-forming reductase family.

It carries out the reaction ilicicolinate B + AH2 + ATP = ilicicolin B + A + AMP + diphosphate. The protein operates within secondary metabolite biosynthesis; terpenoid biosynthesis. Nonribosomal peptide synthase-like protein; part of the cluster that mediates the biosynthesis of LL-Z1272-beta, also known as ilicicolin B, a prenylated aryl-aldehyde produced by several fungi and that serves as a key pathway intermediate for many fungal meroterpenoids. The first step in the pathway is performed by the non-reducing polyketide synthase stbA that produces orsellinic acid by condensing acetyl-CoA with 3 malonyl-CoA units. The prenyltransferase stbC then prenylates orsenilic acid into grifolic acid. Finally, grifolic acid is reduced to ilicicolin B by the NRPS-like protein stbB. In Stachybotrys bisbyi (Hyalostachybotrys bisbyi), this protein is Adenylate-forming reductase stbB.